The following is a 362-amino-acid chain: Peptide chain release factor 1 (362 aa).

Position 240 is an N5-methylglutamine (Gln240).

This sequence belongs to the prokaryotic/mitochondrial release factor family. In terms of processing, methylated by PrmC. Methylation increases the termination efficiency of RF1.

Its subcellular location is the cytoplasm. In terms of biological role, peptide chain release factor 1 directs the termination of translation in response to the peptide chain termination codons UAG and UAA. The sequence is that of Peptide chain release factor 1 from Bifidobacterium longum subsp. infantis (strain ATCC 15697 / DSM 20088 / JCM 1222 / NCTC 11817 / S12).